Here is a 147-residue protein sequence, read N- to C-terminus: 3-hydroxyacyl-[acyl-carrier-protein] dehydratase FabZ (147 aa).

His-49 is an active-site residue.

This sequence belongs to the thioester dehydratase family. FabZ subfamily.

The protein localises to the cytoplasm. The catalysed reaction is a (3R)-hydroxyacyl-[ACP] = a (2E)-enoyl-[ACP] + H2O. In terms of biological role, involved in unsaturated fatty acids biosynthesis. Catalyzes the dehydration of short chain beta-hydroxyacyl-ACPs and long chain saturated and unsaturated beta-hydroxyacyl-ACPs. In Syntrophotalea carbinolica (strain DSM 2380 / NBRC 103641 / GraBd1) (Pelobacter carbinolicus), this protein is 3-hydroxyacyl-[acyl-carrier-protein] dehydratase FabZ.